Consider the following 207-residue polypeptide: Large ribosomal subunit protein bL25 (207 aa).

The tract at residues 182–207 is disordered; that stretch reads QDLGDESVQEEQAAESAEGESEGSED.

This sequence belongs to the bacterial ribosomal protein bL25 family. CTC subfamily. Part of the 50S ribosomal subunit; part of the 5S rRNA/L5/L18/L25 subcomplex. Contacts the 5S rRNA. Binds to the 5S rRNA independently of L5 and L18.

In terms of biological role, this is one of the proteins that binds to the 5S RNA in the ribosome where it forms part of the central protuberance. The sequence is that of Large ribosomal subunit protein bL25 from Micrococcus luteus (strain ATCC 4698 / DSM 20030 / JCM 1464 / CCM 169 / CCUG 5858 / IAM 1056 / NBRC 3333 / NCIMB 9278 / NCTC 2665 / VKM Ac-2230) (Micrococcus lysodeikticus).